Consider the following 291-residue polypeptide: 4-diphosphocytidyl-2-C-methyl-D-erythritol kinase (291 aa).

The active site involves Lys-11. 97–107 (PVAAGIGGGSS) contributes to the ATP binding site. Residue Asp-139 is part of the active site.

Belongs to the GHMP kinase family. IspE subfamily.

The enzyme catalyses 4-CDP-2-C-methyl-D-erythritol + ATP = 4-CDP-2-C-methyl-D-erythritol 2-phosphate + ADP + H(+). It participates in isoprenoid biosynthesis; isopentenyl diphosphate biosynthesis via DXP pathway; isopentenyl diphosphate from 1-deoxy-D-xylulose 5-phosphate: step 3/6. Catalyzes the phosphorylation of the position 2 hydroxy group of 4-diphosphocytidyl-2C-methyl-D-erythritol. The polypeptide is 4-diphosphocytidyl-2-C-methyl-D-erythritol kinase (Methylorubrum extorquens (strain PA1) (Methylobacterium extorquens)).